The primary structure comprises 24 residues: Probable caffeoyl-CoA O-methyltransferase (24 aa).

This sequence belongs to the class I-like SAM-binding methyltransferase superfamily. Cation-dependent O-methyltransferase family. CCoAMT subfamily. A divalent metal cation is required as a cofactor.

The enzyme catalyses (E)-caffeoyl-CoA + S-adenosyl-L-methionine = (E)-feruloyl-CoA + S-adenosyl-L-homocysteine + H(+). The protein operates within aromatic compound metabolism; phenylpropanoid biosynthesis. In terms of biological role, methylates caffeoyl-CoA to feruloyl-CoA and 5-hydroxyferuloyl-CoA to sinapoyl-CoA. Plays a role in the synthesis of feruloylated polysaccharides. Involved in the reinforcement of the plant cell wall. Also involved in the responding to wounding or pathogen challenge by the increased formation of cell wall-bound ferulic acid polymers. In Pinus pinaster (Maritime pine), this protein is Probable caffeoyl-CoA O-methyltransferase.